We begin with the raw amino-acid sequence, 548 residues long: Glucose-6-phosphate isomerase (548 aa).

The active-site Proton donor is glutamate 353. Active-site residues include histidine 384 and lysine 512.

Belongs to the GPI family.

The protein resides in the cytoplasm. It carries out the reaction alpha-D-glucose 6-phosphate = beta-D-fructose 6-phosphate. The protein operates within carbohydrate biosynthesis; gluconeogenesis. It functions in the pathway carbohydrate degradation; glycolysis; D-glyceraldehyde 3-phosphate and glycerone phosphate from D-glucose: step 2/4. Functionally, catalyzes the reversible isomerization of glucose-6-phosphate to fructose-6-phosphate. The sequence is that of Glucose-6-phosphate isomerase from Pseudoalteromonas translucida (strain TAC 125).